The sequence spans 400 residues: 3-phenylpropionate/cinnamic acid dioxygenase ferredoxin--NAD(+) reductase component (400 aa).

An FAD-binding site is contributed by 5 to 36 (TIIIVGGGQAAAMAAASLRQQGFTGELHLFSD). 146-174 (SVVIVGAGTIGLELAASATQRGCKATVIE) contacts NAD(+).

The protein belongs to the bacterial ring-hydroxylating dioxygenase ferredoxin reductase family. This dioxygenase system consists of four proteins: the two subunits of the hydroxylase component (HcaE and HcaF), a ferredoxin (HcaC) and a ferredoxin reductase (HcaD). FAD is required as a cofactor.

The enzyme catalyses 2 reduced [2Fe-2S]-[ferredoxin] + NAD(+) + H(+) = 2 oxidized [2Fe-2S]-[ferredoxin] + NADH. The protein operates within aromatic compound metabolism; 3-phenylpropanoate degradation. Part of the multicomponent 3-phenylpropionate dioxygenase, that converts 3-phenylpropionic acid (PP) and cinnamic acid (CI) into 3-phenylpropionate-dihydrodiol (PP-dihydrodiol) and cinnamic acid-dihydrodiol (CI-dihydrodiol), respectively. The chain is 3-phenylpropionate/cinnamic acid dioxygenase ferredoxin--NAD(+) reductase component from Escherichia coli O7:K1 (strain IAI39 / ExPEC).